The following is a 444-amino-acid chain: ATP-dependent protease ATPase subunit HslU (444 aa).

ATP is bound by residues I18, 60-65 (GVGKTE), D256, E321, and R393.

The protein belongs to the ClpX chaperone family. HslU subfamily. As to quaternary structure, a double ring-shaped homohexamer of HslV is capped on each side by a ring-shaped HslU homohexamer. The assembly of the HslU/HslV complex is dependent on binding of ATP.

Its subcellular location is the cytoplasm. Its function is as follows. ATPase subunit of a proteasome-like degradation complex; this subunit has chaperone activity. The binding of ATP and its subsequent hydrolysis by HslU are essential for unfolding of protein substrates subsequently hydrolyzed by HslV. HslU recognizes the N-terminal part of its protein substrates and unfolds these before they are guided to HslV for hydrolysis. The sequence is that of ATP-dependent protease ATPase subunit HslU from Buchnera aphidicola subsp. Baizongia pistaciae (strain Bp).